Reading from the N-terminus, the 62-residue chain is Small, acid-soluble spore protein H 1 (62 aa).

It belongs to the SspH family.

The protein localises to the spore core. The polypeptide is Small, acid-soluble spore protein H 1 (Clostridium botulinum (strain ATCC 19397 / Type A)).